A 186-amino-acid polypeptide reads, in one-letter code: ATP synthase subunit delta (186 aa).

This sequence belongs to the ATPase delta chain family. F-type ATPases have 2 components, F(1) - the catalytic core - and F(0) - the membrane proton channel. F(1) has five subunits: alpha(3), beta(3), gamma(1), delta(1), epsilon(1). F(0) has three main subunits: a(1), b(2) and c(10-14). The alpha and beta chains form an alternating ring which encloses part of the gamma chain. F(1) is attached to F(0) by a central stalk formed by the gamma and epsilon chains, while a peripheral stalk is formed by the delta and b chains.

The protein localises to the cell inner membrane. In terms of biological role, f(1)F(0) ATP synthase produces ATP from ADP in the presence of a proton or sodium gradient. F-type ATPases consist of two structural domains, F(1) containing the extramembraneous catalytic core and F(0) containing the membrane proton channel, linked together by a central stalk and a peripheral stalk. During catalysis, ATP synthesis in the catalytic domain of F(1) is coupled via a rotary mechanism of the central stalk subunits to proton translocation. This protein is part of the stalk that links CF(0) to CF(1). It either transmits conformational changes from CF(0) to CF(1) or is implicated in proton conduction. In Fuscovulum blasticum (Rhodobacter blasticus), this protein is ATP synthase subunit delta.